The primary structure comprises 27 residues: Caerulein precursor fragment R7 (27 aa).

In terms of tissue distribution, expressed by the skin glands.

It is found in the secreted. In terms of biological role, antimicrobial peptide. This chain is Caerulein precursor fragment R7, found in Xenopus ruwenzoriensis (Uganda clawed frog).